Reading from the N-terminus, the 103-residue chain is Large ribosomal subunit protein bL21 (103 aa).

Belongs to the bacterial ribosomal protein bL21 family. As to quaternary structure, part of the 50S ribosomal subunit. Contacts protein L20.

Functionally, this protein binds to 23S rRNA in the presence of protein L20. In Alkaliphilus oremlandii (strain OhILAs) (Clostridium oremlandii (strain OhILAs)), this protein is Large ribosomal subunit protein bL21.